A 398-amino-acid polypeptide reads, in one-letter code: Acetylornithine aminotransferase (398 aa).

Residues 105–106 and F138 contribute to the pyridoxal 5'-phosphate site; that span reads GA. A N(2)-acetyl-L-ornithine-binding site is contributed by R141. 223 to 226 is a binding site for pyridoxal 5'-phosphate; that stretch reads DEVQ. N6-(pyridoxal phosphate)lysine is present on K252. T280 contacts N(2)-acetyl-L-ornithine. T281 is a pyridoxal 5'-phosphate binding site.

This sequence belongs to the class-III pyridoxal-phosphate-dependent aminotransferase family. ArgD subfamily. In terms of assembly, homodimer. Pyridoxal 5'-phosphate is required as a cofactor.

The protein resides in the cytoplasm. It carries out the reaction N(2)-acetyl-L-ornithine + 2-oxoglutarate = N-acetyl-L-glutamate 5-semialdehyde + L-glutamate. The protein operates within amino-acid biosynthesis; L-arginine biosynthesis; N(2)-acetyl-L-ornithine from L-glutamate: step 4/4. This is Acetylornithine aminotransferase from Methanocaldococcus jannaschii (strain ATCC 43067 / DSM 2661 / JAL-1 / JCM 10045 / NBRC 100440) (Methanococcus jannaschii).